Reading from the N-terminus, the 64-residue chain is Large ribosomal subunit protein bL32 (64 aa).

It belongs to the bacterial ribosomal protein bL32 family.

This chain is Large ribosomal subunit protein bL32, found in Bifidobacterium longum (strain DJO10A).